Consider the following 407-residue polypeptide: Cell division protein FtsZ (407 aa).

GTP contacts are provided by residues glycine 18–asparagine 22, glycine 105–glycine 107, glutamate 136, arginine 140, and aspartate 184. Residues phenylalanine 312–lysine 407 form a disordered region. Composition is skewed to low complexity over residues alanine 336 to proline 348 and alanine 368 to serine 377. The span at valine 381–arginine 390 shows a compositional bias: pro residues. Positions glutamine 396–lysine 407 are enriched in acidic residues.

The protein belongs to the FtsZ family. In terms of assembly, homodimer. Polymerizes to form a dynamic ring structure in a strictly GTP-dependent manner. Interacts directly with several other division proteins.

Its subcellular location is the cytoplasm. In terms of biological role, essential cell division protein that forms a contractile ring structure (Z ring) at the future cell division site. The regulation of the ring assembly controls the timing and the location of cell division. One of the functions of the FtsZ ring is to recruit other cell division proteins to the septum to produce a new cell wall between the dividing cells. Binds GTP and shows GTPase activity. This Streptomyces griseus protein is Cell division protein FtsZ.